The chain runs to 62 residues: Synergistic-type venom protein C8S2, chain 2 (62 aa).

Cystine bridges form between Cys3-Cys24, Cys17-Cys42, and Cys46-Cys57.

Belongs to the three-finger toxin family. Short-chain subfamily. Aminergic toxin sub-subfamily. As to quaternary structure, heterodimer of C8S2 chain 1 (AC P01410) and chain 2; disulfide-linked. As to expression, expressed by the venom gland.

The protein resides in the secreted. Its function is as follows. This protein shows a synergetic toxic effect in that it enhances the toxicity of other toxins. The sequence is that of Synergistic-type venom protein C8S2, chain 2 from Dendroaspis angusticeps (Eastern green mamba).